The following is a 68-amino-acid chain: DNA-directed RNA polymerase subunit Rpo10 (68 aa).

The Zn(2+) site is built by C7, C10, C44, and C45.

The protein belongs to the archaeal Rpo10/eukaryotic RPB10 RNA polymerase subunit family. Part of the RNA polymerase complex. It depends on Zn(2+) as a cofactor.

The protein localises to the cytoplasm. The enzyme catalyses RNA(n) + a ribonucleoside 5'-triphosphate = RNA(n+1) + diphosphate. Functionally, DNA-dependent RNA polymerase (RNAP) catalyzes the transcription of DNA into RNA using the four ribonucleoside triphosphates as substrates. The protein is DNA-directed RNA polymerase subunit Rpo10 of Methanococcus maripaludis (strain C6 / ATCC BAA-1332).